The following is a 264-amino-acid chain: Probable glycerophosphodiester phosphodiesterase 2 (264 aa).

Positions 17–255 (RIAMAHRGFT…DRADLLRDVL (239 aa)) constitute a GP-PDE domain. The active-site Proton acceptor is H22. A divalent metal cation contacts are provided by E50, D52, and H65. H65 (proton donor) is an active-site residue.

Belongs to the glycerophosphoryl diester phosphodiesterase family. Requires a divalent metal cation as cofactor.

The catalysed reaction is a sn-glycero-3-phosphodiester + H2O = an alcohol + sn-glycerol 3-phosphate + H(+). In terms of biological role, glycerophosphodiester phosphodiesterase hydrolyzes glycerophosphodiesters into glycerol-3-phosphate (G3P) and the corresponding alcohol. The protein is Probable glycerophosphodiester phosphodiesterase 2 of Mycobacterium tuberculosis (strain ATCC 25618 / H37Rv).